The chain runs to 166 residues: MRVLILSADQFEDVELIYPYHRLKEEGHEVLVASFKRGVITGKHGYTVNVDLAFEEVNPDEFDALVLPGGRAPERVRLNEKAVEIAKKMFSEGKPVASICHGPQILISAGVLRGRRGTSYPGIKDDMINAGVDWVDAEVVVDGNWVSSRVPGDLYAWMREFVKLLK.

The PfpI endopeptidase domain occupies 1 to 166; it reads MRVLILSADQ…WMREFVKLLK (166 aa). The active site involves histidine 101.

Belongs to the peptidase C56 family. As to quaternary structure, homohexamer formed by a dimer of trimers that assemble into a hollow ring structure.

It is found in the cytoplasm. It catalyses the reaction N(omega)-(1-hydroxy-2-oxopropyl)-L-arginyl-[protein] + H2O = lactate + L-arginyl-[protein] + H(+). The enzyme catalyses N(6)-(1-hydroxy-2-oxopropyl)-L-lysyl-[protein] + H2O = lactate + L-lysyl-[protein] + H(+). The catalysed reaction is S-(1-hydroxy-2-oxopropyl)-L-cysteinyl-[protein] + H2O = lactate + L-cysteinyl-[protein] + H(+). It carries out the reaction N(omega)-(1-hydroxy-2-oxoethyl)-L-arginyl-[protein] + H2O = L-arginyl-[protein] + glycolate + H(+). It catalyses the reaction N(6)-(1-hydroxy-2-oxoethyl)-L-lysyl-[protein] + H2O = glycolate + L-lysyl-[protein] + H(+). The enzyme catalyses S-(1-hydroxy-2-oxoethyl)-L-cysteinyl-[protein] + H2O = glycolate + L-cysteinyl-[protein] + H(+). Functionally, deglycase that catalyzes the deglycation of the Maillard adducts formed between amino groups of proteins and reactive carbonyl groups of glyoxals. Thus, functions as a protein deglycase that repairs methylglyoxal- and glyoxal-glycated proteins, and releases repaired proteins and lactate or glycolate, respectively. Deglycates cysteine, arginine and lysine residues in proteins, and thus reactivates these proteins by reversing glycation by glyoxals. Acts on early glycation intermediates (hemithioacetals and aminocarbinols), preventing the formation of advanced glycation endproducts (AGE) that cause irreversible damage. Also displays proteolytic activity. This Pyrococcus abyssi (strain GE5 / Orsay) protein is Deglycase PYRAB04690.